The primary structure comprises 151 residues: Large ribosomal subunit protein bL9 (151 aa).

The protein belongs to the bacterial ribosomal protein bL9 family.

Functionally, binds to the 23S rRNA. This is Large ribosomal subunit protein bL9 from Mycolicibacterium smegmatis (strain ATCC 700084 / mc(2)155) (Mycobacterium smegmatis).